A 212-amino-acid polypeptide reads, in one-letter code: Ribosomal RNA small subunit methyltransferase G (212 aa).

S-adenosyl-L-methionine contacts are provided by residues G73, 127–128 (IE), and R143.

The protein belongs to the methyltransferase superfamily. RNA methyltransferase RsmG family.

The protein localises to the cytoplasm. The enzyme catalyses guanosine(527) in 16S rRNA + S-adenosyl-L-methionine = N(7)-methylguanosine(527) in 16S rRNA + S-adenosyl-L-homocysteine. Specifically methylates the N7 position of guanine in position 527 of 16S rRNA. The polypeptide is Ribosomal RNA small subunit methyltransferase G (Methylobacterium nodulans (strain LMG 21967 / CNCM I-2342 / ORS 2060)).